A 103-amino-acid polypeptide reads, in one-letter code: Small ribosomal subunit protein uS10 (103 aa).

This sequence belongs to the universal ribosomal protein uS10 family. Part of the 30S ribosomal subunit.

Its function is as follows. Involved in the binding of tRNA to the ribosomes. This Vibrio cholerae serotype O1 (strain ATCC 39541 / Classical Ogawa 395 / O395) protein is Small ribosomal subunit protein uS10.